A 432-amino-acid polypeptide reads, in one-letter code: Adenylosuccinate synthetase (432 aa).

Residues 13-19 (GDEGKGK) and 41-43 (GHT) each bind GTP. Catalysis depends on Asp-14, which acts as the Proton acceptor. Mg(2+) is bound by residues Asp-14 and Gly-41. IMP contacts are provided by residues 14 to 17 (DEGK), 39 to 42 (NAGH), Thr-130, Arg-144, Gln-225, Thr-240, and Arg-304. The active-site Proton donor is His-42. Substrate is bound at residue 300 to 306 (ATTGRKR). GTP is bound by residues Arg-306, 332–334 (KLD), and 415–417 (STG).

It belongs to the adenylosuccinate synthetase family. In terms of assembly, homodimer. It depends on Mg(2+) as a cofactor.

The protein resides in the cytoplasm. It carries out the reaction IMP + L-aspartate + GTP = N(6)-(1,2-dicarboxyethyl)-AMP + GDP + phosphate + 2 H(+). The protein operates within purine metabolism; AMP biosynthesis via de novo pathway; AMP from IMP: step 1/2. In terms of biological role, plays an important role in the de novo pathway of purine nucleotide biosynthesis. Catalyzes the first committed step in the biosynthesis of AMP from IMP. The sequence is that of Adenylosuccinate synthetase from Vibrio cholerae serotype O1 (strain ATCC 39541 / Classical Ogawa 395 / O395).